The chain runs to 210 residues: V-type sodium ATPase subunit D (210 aa).

Belongs to the V-ATPase D subunit family.

Functionally, involved in ATP-driven sodium extrusion. The protein is V-type sodium ATPase subunit D (ntpD) of Enterococcus hirae (strain ATCC 9790 / DSM 20160 / JCM 8729 / LMG 6399 / NBRC 3181 / NCIMB 6459 / NCDO 1258 / NCTC 12367 / WDCM 00089 / R).